A 128-amino-acid chain; its full sequence is Aspartate 1-decarboxylase (128 aa).

The Schiff-base intermediate with substrate; via pyruvic acid role is filled by Ser-25. At Ser-25 the chain carries Pyruvic acid (Ser). Position 57 (Thr-57) interacts with substrate. Residue Tyr-58 is the Proton donor of the active site. 73 to 75 (GAA) lines the substrate pocket.

This sequence belongs to the PanD family. In terms of assembly, heterooctamer of four alpha and four beta subunits. Requires pyruvate as cofactor. In terms of processing, is synthesized initially as an inactive proenzyme, which is activated by self-cleavage at a specific serine bond to produce a beta-subunit with a hydroxyl group at its C-terminus and an alpha-subunit with a pyruvoyl group at its N-terminus.

The protein resides in the cytoplasm. It carries out the reaction L-aspartate + H(+) = beta-alanine + CO2. It participates in cofactor biosynthesis; (R)-pantothenate biosynthesis; beta-alanine from L-aspartate: step 1/1. In terms of biological role, catalyzes the pyruvoyl-dependent decarboxylation of aspartate to produce beta-alanine. The protein is Aspartate 1-decarboxylase of Caldicellulosiruptor saccharolyticus (strain ATCC 43494 / DSM 8903 / Tp8T 6331).